Reading from the N-terminus, the 626-residue chain is Lipoprotein LpqB (626 aa).

The signal sequence occupies residues 1–23 (MIGQANRIAAAVSTACLAVLLAG). Cysteine 24 carries N-palmitoyl cysteine lipidation. Cysteine 24 is lipidated: S-diacylglycerol cysteine. Positions 428-457 (EAEREEDLADDTEPGDTAVGSTERRETDRG) are disordered. The span at 430–441 (EREEDLADDTEP) shows a compositional bias: acidic residues.

This sequence belongs to the LpqB lipoprotein family.

It localises to the cell membrane. The protein is Lipoprotein LpqB of Thermobifida fusca (strain YX).